The following is a 437-amino-acid chain: ATP-dependent RNA helicase RhlB (437 aa).

The short motif at 9-37 (QKFADLGLKPQVTEGLEKKGFEYCTPIQA) is the Q motif element. The Helicase ATP-binding domain occupies 40–219 (LPVLLTGQDI…FEHMHNPEHV (180 aa)). Residue 53–60 (AQTGTGKT) participates in ATP binding. The DEAD box signature appears at 165 to 168 (DEAD). Residues 245-390 (ALLQTLIEEE…VSDYDASALI (146 aa)) form the Helicase C-terminal domain. A disordered region spans residues 395–437 (APLRMRAPRTQQRRTNTGGTRSGNRKPQGRRPRQPRQSAPKQS). Positions 403-413 (RTQQRRTNTGG) are enriched in low complexity. Positions 417 to 428 (GNRKPQGRRPRQ) are enriched in basic residues.

Belongs to the DEAD box helicase family. RhlB subfamily. Component of the RNA degradosome, which is a multiprotein complex involved in RNA processing and mRNA degradation.

The protein localises to the cytoplasm. The enzyme catalyses ATP + H2O = ADP + phosphate + H(+). In terms of biological role, DEAD-box RNA helicase involved in RNA degradation. Has RNA-dependent ATPase activity and unwinds double-stranded RNA. This chain is ATP-dependent RNA helicase RhlB, found in Vibrio campbellii (strain ATCC BAA-1116).